A 459-amino-acid chain; its full sequence is MKPLVAIVGRPNVGKSTLFNRLVGRRIALVQDEPGVTRDRHYADAEWEGRQFTFIDTGGFVPGDEDQLLQQVREQAQLAVDECDVIVFVTDARAGLTAADEAVANYLRKSGKPVVLAANKLDNTSGQMQALAGEFYRLGLGDVQALSAEHGLGMQELFDSVVARLPPKEEGEDAEAPPDDGIIRLAIIGRPNVGKSTLVNAILKEKRVVASDVAGTTRDPVDSELTYKDRKLLLTDTAGIRRKKSIAQRVEQFSVVAALKVMERSDVAVLLMDATEPAVDQDAKLAGLAEERGRALVIVVNKWDLVGADQRRQETYRESLKHSLKFVGYAPILFTSALTGSKVEKVVDVATELADQFRFRAPTPQLNRLLDHMVDNHPAPIVRGKPLRMYYIAQVAAAPPTFTITVNHPDGVPDMYKRYITNQLRKTFDLRVPIRLIFKGRPGQAKREARKRPQRQGKR.

EngA-type G domains are found at residues 3–169 (PLVA…PPKE) and 183–358 (IRLA…DQFR). Residues 9–16 (GRPNVGKS), 56–60 (DTGGF), 119–122 (NKLD), 189–196 (GRPNVGKS), 236–240 (DTAGI), and 301–304 (NKWD) each bind GTP. The region spanning 359-442 (FRAPTPQLNR…PIRLIFKGRP (84 aa)) is the KH-like domain.

The protein belongs to the TRAFAC class TrmE-Era-EngA-EngB-Septin-like GTPase superfamily. EngA (Der) GTPase family. As to quaternary structure, associates with the 50S ribosomal subunit.

GTPase that plays an essential role in the late steps of ribosome biogenesis. This is GTPase Der from Myxococcus xanthus (strain DK1622).